We begin with the raw amino-acid sequence, 780 residues long: Cullin-5 (780 aa).

Position 34 is a phosphoserine (Ser-34). Thr-210 is modified (phosphothreonine). The Cullin neddylation domain maps to 711–772 (RILRTQEAII…HKYIRRDEAD (62 aa)). A Glycyl lysine isopeptide (Lys-Gly) (interchain with G-Cter in NEDD8) cross-link involves residue Lys-724.

It belongs to the cullin family. In terms of assembly, component of multiple cullin-5-RING E3 ubiquitin-protein ligase complexes (ECS complexes, also named CRL5 complexes) formed of CUL5, Elongin BC (ELOB and ELOC), RNF7/RBX2 and a variable SOCS box domain-containing protein as substrate-specific recognition component. CUL5-containing ECS complexes specifically contain RNF7/RBX2, and not RBX1, as catalytic subunit. Component of the ECS(ASB2) complex with the substrate recognition component ASB2. Component of the ECS(ASB6) complex with the substrate recognition component ASB6. Component of the ECS(ASB7) complex with the substrate recognition component ASB7. Component of the ECS(ASB9) complex with the substrate recognition component ASB9. Component of the ECS(ASB11) complex with the substrate recognition component ASB11. Component of the ECS(ASB12) complex with the substrate recognition component ASB12. Component of the ECS(LRRC41) complex with the substrate recognition component LRRC41. Component of the ECS(SOCS1) complex with the substrate recognition component SOCS1. Component of the ECS(SOCS2) complex with the substrate recognition component SOCS2. Component of the ECS(WSB1) complex with the substrate recognition subunit WSB1. Component of the ECS(SOCS3) complex with the substrate recognition component SOCS3. Component of the ECS(SOCS7) complex with the substrate recognition component SOCS7. Component of the ECS(SPSB1) complex with the substrate recognition component SPSB1. Component of the ECS(SPSB3) complex with the substrate recognition component SPSB3. Component of the ECS(SPSB2) complex with the substrate recognition component SPSB2. Component of the ECS(SPSB4) complex with the substrate recognition component SPSB4. Component of the ECS(RAB40) complex with the substrate recognition subunit RAB40A, RAB40B or RAB40C. Component of the ECS(KLHDC1) complex with the substrate recognition component KLHDC1. Component of the ECS(PCMTD1) complex with the substrate recognition subunit PCMTD1. May also form complexes containing RBX1 and ELOA or VHL; additional evidence is however required to confirm this result in vivo. Interacts (when neddylated) with ARIH2; leading to activate the E3 ligase activity of ARIH2. Interacts with ERCC6; the interaction is induced by DNA damaging agents or inhibitors of RNA polymerase II elongation. Interacts with ELOA (via the BC-box). Interacts (unneddylated form) with DCUN1D1, DCUN1D2, DCUN1D3, DCUN1D4 and DCUN1D5; these interactions promote the cullin neddylation. In terms of processing, neddylated; which enhances the ubiquitination activity of ECS complexes and prevents binding of the inhibitor CAND1. Deneddylated via its interaction with the COP9 signalosome (CSN).

It localises to the nucleus. It functions in the pathway protein modification; protein ubiquitination. In terms of biological role, core component of multiple cullin-5-RING E3 ubiquitin-protein ligase complexes (ECS complexes, also named CRL5 complexes), which mediate the ubiquitination and subsequent proteasomal degradation of target proteins. Acts a scaffold protein that contributes to catalysis through positioning of the substrate and the ubiquitin-conjugating enzyme. The functional specificity of the E3 ubiquitin-protein ligase complex depends on the variable SOCS box-containing substrate recognition component. Acts as a key regulator of neuron positioning during cortex development: component of various SOCS-containing ECS complexes, such as the ECS(SOCS7) complex, that regulate reelin signaling by mediating ubiquitination and degradation of DAB1. ECS(SOCS1) seems to direct ubiquitination of JAK2. The ECS(SOCS2) complex mediates the ubiquitination and subsequent proteasomal degradation of phosphorylated EPOR and GHR. The ECS(SPSB3) complex catalyzes ubiquitination of nuclear CGAS. ECS(KLHDC1) complex is part of the DesCEND (destruction via C-end degrons) pathway and mediates ubiquitination and degradation of truncated SELENOS selenoprotein produced by failed UGA/Sec decoding, which ends with a glycine. The ECS(ASB9) complex mediates ubiquitination and degradation of CKB. As part of some ECS complex, promotes 'Lys-11'-linked ubiquitination and degradation of BTRC. As part of a multisubunit ECS complex, polyubiquitinates monoubiquitinated POLR2A. As part of the ECS(RAB40C) complex, mediates ANKRD28 ubiquitination and degradation, thereby regulating protein phosphatase 6 (PP6) complex activity and focal adhesion assembly during cell migration. As part of the ECS(RAB40A) complex, mediates RHOU 'Lys-48'-linked ubiquitination and degradation, thus inhibiting focal adhesion disassembly during cell migration. As part of the ECS(RAB40B) complex, mediates LIMA1/EPLIN and RAP2 ubiquitination, thereby regulating actin cytoskeleton dynamics and stress fiber formation during cell migration. May form a cell surface vasopressin receptor. This is Cullin-5 from Rattus norvegicus (Rat).